Consider the following 290-residue polypeptide: Phosphonopyruvate hydrolase (290 aa).

Residue 40–44 (WGSGF) coordinates substrate. D54 serves as the catalytic Nucleophile. Residue D81 coordinates Mg(2+). 3 residues coordinate substrate: R155, H186, and R188.

As to quaternary structure, homodimer. Homotetramer. Co(2+) serves as cofactor. The cofactor is Mg(2+). Mn(2+) is required as a cofactor.

The enzyme catalyses 3-phosphonopyruvate + H2O = pyruvate + phosphate + H(+). With respect to regulation, partially inhibited by EDTA. Activity is restored by Co(2+), and to a lesser extent by Ni(2+) and Mg(2+). Unaffected by Cs(2+) and Ca(2+). Activity is reduced by Mn(2+) and Cu(2+). Functionally, hydrolyzes phosphonopyruvate. Not active towards phosphoenolpyruvate, glycerophosphate, phospho-L-serine or phosphoglycolic acid. This is Phosphonopyruvate hydrolase from Variovorax sp. (strain Pal2).